We begin with the raw amino-acid sequence, 159 residues long: MRTGVRLAVDPGAARIGVARSDPDGILAIPVETIRRGPGDLDRIAALVLEYEAREVIVGYPASLSGAEGRAARAARAFAKALARRLAPVPVRLVDERLTTVTAELHLRTGASYRKRGARGGRARRSVIDQAAATVLLQNALDTERRTKLPPGELVEGTP.

It belongs to the YqgF nuclease family.

It localises to the cytoplasm. Functionally, could be a nuclease involved in processing of the 5'-end of pre-16S rRNA. In Thermobifida fusca (strain YX), this protein is Putative pre-16S rRNA nuclease.